A 462-amino-acid polypeptide reads, in one-letter code: 23S rRNA (uracil(1939)-C(5))-methyltransferase RlmD (462 aa).

In terms of domain architecture, TRAM spans 6–76; the sequence is KSRKPQQPEY…KRLEEAEMVE (71 aa). Residues cysteine 90, cysteine 96, cysteine 99, and cysteine 178 each contribute to the [4Fe-4S] cluster site. Residues glutamine 287, phenylalanine 316, asparagine 321, glutamate 340, aspartate 367, and aspartate 388 each contribute to the S-adenosyl-L-methionine site. Cysteine 414 functions as the Nucleophile in the catalytic mechanism.

This sequence belongs to the class I-like SAM-binding methyltransferase superfamily. RNA M5U methyltransferase family. RlmD subfamily.

The catalysed reaction is uridine(1939) in 23S rRNA + S-adenosyl-L-methionine = 5-methyluridine(1939) in 23S rRNA + S-adenosyl-L-homocysteine + H(+). In terms of biological role, catalyzes the formation of 5-methyl-uridine at position 1939 (m5U1939) in 23S rRNA. The polypeptide is 23S rRNA (uracil(1939)-C(5))-methyltransferase RlmD (Acinetobacter baumannii (strain AB0057)).